We begin with the raw amino-acid sequence, 388 residues long: Formate-dependent phosphoribosylglycinamide formyltransferase (388 aa).

N(1)-(5-phospho-beta-D-ribosyl)glycinamide-binding positions include 20–21 (EL) and Glu-80. Residues Arg-112, Lys-153, 158–163 (SSGKGQ), 193–196 (EEFI), and Glu-201 each bind ATP. The 190-residue stretch at 117 to 306 (RLAFEKLGLR…EFEIHARAIL (190 aa)) folds into the ATP-grasp domain. Mg(2+)-binding residues include Glu-265 and Glu-277. N(1)-(5-phospho-beta-D-ribosyl)glycinamide contacts are provided by residues Asp-284, Lys-352, and 359–360 (RR).

Belongs to the PurK/PurT family. As to quaternary structure, homodimer.

It carries out the reaction N(1)-(5-phospho-beta-D-ribosyl)glycinamide + formate + ATP = N(2)-formyl-N(1)-(5-phospho-beta-D-ribosyl)glycinamide + ADP + phosphate + H(+). It functions in the pathway purine metabolism; IMP biosynthesis via de novo pathway; N(2)-formyl-N(1)-(5-phospho-D-ribosyl)glycinamide from N(1)-(5-phospho-D-ribosyl)glycinamide (formate route): step 1/1. Involved in the de novo purine biosynthesis. Catalyzes the transfer of formate to 5-phospho-ribosyl-glycinamide (GAR), producing 5-phospho-ribosyl-N-formylglycinamide (FGAR). Formate is provided by PurU via hydrolysis of 10-formyl-tetrahydrofolate. This Methanococcus maripaludis (strain DSM 14266 / JCM 13030 / NBRC 101832 / S2 / LL) protein is Formate-dependent phosphoribosylglycinamide formyltransferase.